The sequence spans 359 residues: Carbamoyl phosphate synthase small chain (359 aa).

Residues 1–169 (MTKRILVLED…TKTSYPAPGV (169 aa)) are CPSase. L-glutamine-binding residues include serine 46, glycine 220, and glycine 222. Residues 172 to 358 (SVVLVDFGLK…IEMMEVFKQS (187 aa)) enclose the Glutamine amidotransferase type-1 domain. Cysteine 247 (nucleophile) is an active-site residue. 5 residues coordinate L-glutamine: methionine 248, glutamine 251, asparagine 289, glycine 291, and tyrosine 292. Active-site residues include histidine 331 and aspartate 333.

The protein belongs to the CarA family. Composed of two chains; the small (or glutamine) chain promotes the hydrolysis of glutamine to ammonia, which is used by the large (or ammonia) chain to synthesize carbamoyl phosphate. Tetramer of heterodimers (alpha,beta)4.

The enzyme catalyses hydrogencarbonate + L-glutamine + 2 ATP + H2O = carbamoyl phosphate + L-glutamate + 2 ADP + phosphate + 2 H(+). The catalysed reaction is L-glutamine + H2O = L-glutamate + NH4(+). The protein operates within amino-acid biosynthesis; L-arginine biosynthesis; carbamoyl phosphate from bicarbonate: step 1/1. It functions in the pathway pyrimidine metabolism; UMP biosynthesis via de novo pathway; (S)-dihydroorotate from bicarbonate: step 1/3. Small subunit of the glutamine-dependent carbamoyl phosphate synthetase (CPSase). CPSase catalyzes the formation of carbamoyl phosphate from the ammonia moiety of glutamine, carbonate, and phosphate donated by ATP, constituting the first step of 2 biosynthetic pathways, one leading to arginine and/or urea and the other to pyrimidine nucleotides. The small subunit (glutamine amidotransferase) binds and cleaves glutamine to supply the large subunit with the substrate ammonia. The protein is Carbamoyl phosphate synthase small chain of Streptococcus pneumoniae (strain ATCC BAA-255 / R6).